Consider the following 200-residue polypeptide: ATP-dependent Clp protease proteolytic subunit 1 (200 aa).

Catalysis depends on Ser-98, which acts as the Nucleophile. The active site involves His-123.

The protein belongs to the peptidase S14 family. As to quaternary structure, fourteen ClpP subunits assemble into 2 heptameric rings which stack back to back to give a disk-like structure with a central cavity, resembling the structure of eukaryotic proteasomes.

It localises to the cytoplasm. The enzyme catalyses Hydrolysis of proteins to small peptides in the presence of ATP and magnesium. alpha-casein is the usual test substrate. In the absence of ATP, only oligopeptides shorter than five residues are hydrolyzed (such as succinyl-Leu-Tyr-|-NHMec, and Leu-Tyr-Leu-|-Tyr-Trp, in which cleavage of the -Tyr-|-Leu- and -Tyr-|-Trp bonds also occurs).. Functionally, cleaves peptides in various proteins in a process that requires ATP hydrolysis. Has a chymotrypsin-like activity. Plays a major role in the degradation of misfolded proteins. This Mycobacterium bovis (strain ATCC BAA-935 / AF2122/97) protein is ATP-dependent Clp protease proteolytic subunit 1.